An 89-amino-acid chain; its full sequence is Large ribosomal subunit protein bL27 (89 aa).

The interval 1 to 23 (MAHKKAGGSSRNGRDSHSKRLGV) is disordered.

This sequence belongs to the bacterial ribosomal protein bL27 family.

The chain is Large ribosomal subunit protein bL27 from Mesorhizobium japonicum (strain LMG 29417 / CECT 9101 / MAFF 303099) (Mesorhizobium loti (strain MAFF 303099)).